We begin with the raw amino-acid sequence, 191 residues long: Leucyl/phenylalanyl-tRNA--protein transferase (191 aa).

The protein belongs to the L/F-transferase family.

The protein resides in the cytoplasm. The catalysed reaction is N-terminal L-lysyl-[protein] + L-leucyl-tRNA(Leu) = N-terminal L-leucyl-L-lysyl-[protein] + tRNA(Leu) + H(+). It carries out the reaction N-terminal L-arginyl-[protein] + L-leucyl-tRNA(Leu) = N-terminal L-leucyl-L-arginyl-[protein] + tRNA(Leu) + H(+). It catalyses the reaction L-phenylalanyl-tRNA(Phe) + an N-terminal L-alpha-aminoacyl-[protein] = an N-terminal L-phenylalanyl-L-alpha-aminoacyl-[protein] + tRNA(Phe). Functions in the N-end rule pathway of protein degradation where it conjugates Leu, Phe and, less efficiently, Met from aminoacyl-tRNAs to the N-termini of proteins containing an N-terminal arginine or lysine. The protein is Leucyl/phenylalanyl-tRNA--protein transferase of Trichormus variabilis (strain ATCC 29413 / PCC 7937) (Anabaena variabilis).